A 1036-amino-acid chain; its full sequence is Protein translocase subunit SecA, chloroplastic (1036 aa).

The N-terminal 76 residues, 1–76, are a transit peptide targeting the chloroplast; it reads MESCARSASQ…KIGELMQVRA (76 aa). Position 186–193 (186–193) interacts with ATP; the sequence is MRTGEGKT. Residues 995–1036 are disordered; that stretch reads NQEQQQKGKPDSSNVENKRIGDANLNPVSVTESPSSDSPQNT. Residues 1000-1015 are compositionally biased toward basic and acidic residues; that stretch reads QKGKPDSSNVENKRIG. Over residues 1020–1036 the composition is skewed to polar residues; it reads NPVSVTESPSSDSPQNT.

Belongs to the SecA family.

It localises to the plastid. The protein localises to the chloroplast stroma. It is found in the chloroplast thylakoid membrane. The enzyme catalyses ATP + H2O + chloroplast-proteinSide 1 = ADP + phosphate + chloroplast-proteinSide 2.. In terms of biological role, has a central role in coupling the hydrolysis of ATP to the transfer of proteins across the thylakoid membrane. The protein is Protein translocase subunit SecA, chloroplastic of Spinacia oleracea (Spinach).